The sequence spans 213 residues: Thiamine-phosphate synthase (213 aa).

4-amino-2-methyl-5-(diphosphooxymethyl)pyrimidine is bound by residues 42–46 (QYREK) and aspartate 77. 2 residues coordinate Mg(2+): aspartate 78 and aspartate 97. Serine 116 is a binding site for 4-amino-2-methyl-5-(diphosphooxymethyl)pyrimidine. 142–144 (TIS) lines the 2-[(2R,5Z)-2-carboxy-4-methylthiazol-5(2H)-ylidene]ethyl phosphate pocket. Position 145 (lysine 145) interacts with 4-amino-2-methyl-5-(diphosphooxymethyl)pyrimidine. Residues glycine 173 and 193-194 (IS) contribute to the 2-[(2R,5Z)-2-carboxy-4-methylthiazol-5(2H)-ylidene]ethyl phosphate site.

The protein belongs to the thiamine-phosphate synthase family. Requires Mg(2+) as cofactor.

The catalysed reaction is 2-[(2R,5Z)-2-carboxy-4-methylthiazol-5(2H)-ylidene]ethyl phosphate + 4-amino-2-methyl-5-(diphosphooxymethyl)pyrimidine + 2 H(+) = thiamine phosphate + CO2 + diphosphate. It carries out the reaction 2-(2-carboxy-4-methylthiazol-5-yl)ethyl phosphate + 4-amino-2-methyl-5-(diphosphooxymethyl)pyrimidine + 2 H(+) = thiamine phosphate + CO2 + diphosphate. It catalyses the reaction 4-methyl-5-(2-phosphooxyethyl)-thiazole + 4-amino-2-methyl-5-(diphosphooxymethyl)pyrimidine + H(+) = thiamine phosphate + diphosphate. The protein operates within cofactor biosynthesis; thiamine diphosphate biosynthesis; thiamine phosphate from 4-amino-2-methyl-5-diphosphomethylpyrimidine and 4-methyl-5-(2-phosphoethyl)-thiazole: step 1/1. Functionally, condenses 4-methyl-5-(beta-hydroxyethyl)thiazole monophosphate (THZ-P) and 2-methyl-4-amino-5-hydroxymethyl pyrimidine pyrophosphate (HMP-PP) to form thiamine monophosphate (TMP). The polypeptide is Thiamine-phosphate synthase (Limosilactobacillus fermentum (strain NBRC 3956 / LMG 18251) (Lactobacillus fermentum)).